Consider the following 357-residue polypeptide: UDP-N-acetylglucosamine--N-acetylmuramyl-(pentapeptide) pyrophosphoryl-undecaprenol N-acetylglucosamine transferase (357 aa).

UDP-N-acetyl-alpha-D-glucosamine contacts are provided by residues threonine 13–glycine 15, asparagine 125, arginine 161, serine 189, isoleucine 243, and glutamine 288.

The protein belongs to the glycosyltransferase 28 family. MurG subfamily.

The protein localises to the cell inner membrane. It catalyses the reaction di-trans,octa-cis-undecaprenyl diphospho-N-acetyl-alpha-D-muramoyl-L-alanyl-D-glutamyl-meso-2,6-diaminopimeloyl-D-alanyl-D-alanine + UDP-N-acetyl-alpha-D-glucosamine = di-trans,octa-cis-undecaprenyl diphospho-[N-acetyl-alpha-D-glucosaminyl-(1-&gt;4)]-N-acetyl-alpha-D-muramoyl-L-alanyl-D-glutamyl-meso-2,6-diaminopimeloyl-D-alanyl-D-alanine + UDP + H(+). The protein operates within cell wall biogenesis; peptidoglycan biosynthesis. Cell wall formation. Catalyzes the transfer of a GlcNAc subunit on undecaprenyl-pyrophosphoryl-MurNAc-pentapeptide (lipid intermediate I) to form undecaprenyl-pyrophosphoryl-MurNAc-(pentapeptide)GlcNAc (lipid intermediate II). In Polynucleobacter asymbioticus (strain DSM 18221 / CIP 109841 / QLW-P1DMWA-1) (Polynucleobacter necessarius subsp. asymbioticus), this protein is UDP-N-acetylglucosamine--N-acetylmuramyl-(pentapeptide) pyrophosphoryl-undecaprenol N-acetylglucosamine transferase.